The sequence spans 154 residues: SsrA-binding protein (154 aa).

It belongs to the SmpB family.

Its subcellular location is the cytoplasm. Functionally, required for rescue of stalled ribosomes mediated by trans-translation. Binds to transfer-messenger RNA (tmRNA), required for stable association of tmRNA with ribosomes. tmRNA and SmpB together mimic tRNA shape, replacing the anticodon stem-loop with SmpB. tmRNA is encoded by the ssrA gene; the 2 termini fold to resemble tRNA(Ala) and it encodes a 'tag peptide', a short internal open reading frame. During trans-translation Ala-aminoacylated tmRNA acts like a tRNA, entering the A-site of stalled ribosomes, displacing the stalled mRNA. The ribosome then switches to translate the ORF on the tmRNA; the nascent peptide is terminated with the 'tag peptide' encoded by the tmRNA and targeted for degradation. The ribosome is freed to recommence translation, which seems to be the essential function of trans-translation. In Synechococcus sp. (strain JA-3-3Ab) (Cyanobacteria bacterium Yellowstone A-Prime), this protein is SsrA-binding protein.